The sequence spans 373 residues: Dual-specificity RNA methyltransferase RlmN (373 aa).

Glu-94 functions as the Proton acceptor in the catalytic mechanism. Residues 100-339 (EDDRATLCVS…VIVRKTRGDD (240 aa)) form the Radical SAM core domain. A disulfide bridge links Cys-107 with Cys-344. Positions 114, 118, and 121 each coordinate [4Fe-4S] cluster. S-adenosyl-L-methionine contacts are provided by residues 168-169 (GE), Ser-200, 222-224 (SIH), and Asn-301. The active-site S-methylcysteine intermediate is the Cys-344.

The protein belongs to the radical SAM superfamily. RlmN family. Requires [4Fe-4S] cluster as cofactor.

Its subcellular location is the cytoplasm. It carries out the reaction adenosine(2503) in 23S rRNA + 2 reduced [2Fe-2S]-[ferredoxin] + 2 S-adenosyl-L-methionine = 2-methyladenosine(2503) in 23S rRNA + 5'-deoxyadenosine + L-methionine + 2 oxidized [2Fe-2S]-[ferredoxin] + S-adenosyl-L-homocysteine. It catalyses the reaction adenosine(37) in tRNA + 2 reduced [2Fe-2S]-[ferredoxin] + 2 S-adenosyl-L-methionine = 2-methyladenosine(37) in tRNA + 5'-deoxyadenosine + L-methionine + 2 oxidized [2Fe-2S]-[ferredoxin] + S-adenosyl-L-homocysteine. Its function is as follows. Specifically methylates position 2 of adenine 2503 in 23S rRNA and position 2 of adenine 37 in tRNAs. m2A2503 modification seems to play a crucial role in the proofreading step occurring at the peptidyl transferase center and thus would serve to optimize ribosomal fidelity. In Shewanella sp. (strain MR-7), this protein is Dual-specificity RNA methyltransferase RlmN.